A 550-amino-acid polypeptide reads, in one-letter code: Coiled-coil domain-containing protein 60 (550 aa).

Residues 1–21 form a disordered region; the sequence is MTKVPATKKLQSSPNSGAVRP. Residues 71–98 are a coiled coil; sequence AILREETAKKKKQQQLQKLKEEERNKFQ. Disordered stretches follow at residues 219–293 and 336–367; these read KFKI…EPLY and AYKE…KKSK. Residues 235–256 are compositionally biased toward low complexity; the sequence is RGSTLSLSRASGGSSPQSSMIS. Polar residues predominate over residues 336–345; the sequence is AYKEMQTTLK.

The sequence is that of Coiled-coil domain-containing protein 60 (CCDC60) from Homo sapiens (Human).